The sequence spans 236 residues: Small ribosomal subunit protein uS2c (236 aa).

Belongs to the universal ribosomal protein uS2 family.

The protein localises to the plastid. It localises to the chloroplast. This Lemna minor (Common duckweed) protein is Small ribosomal subunit protein uS2c (rps2).